The primary structure comprises 261 residues: Putative phosphite transport system permease protein HtxE (261 aa).

The region spanning Glu47–Gln253 is the ABC transmembrane type-1 domain. 3 consecutive transmembrane segments (helical) span residues Leu122–Ala142, Arg203–Gly220, and Met229–Leu249.

This sequence belongs to the binding-protein-dependent transport system permease family.

Its subcellular location is the cell inner membrane. Functionally, probably forms part of a binding-protein-dependent hypophosphite transporter. The polypeptide is Putative phosphite transport system permease protein HtxE (htxE) (Stutzerimonas stutzeri (Pseudomonas stutzeri)).